Here is a 597-residue protein sequence, read N- to C-terminus: Alpha-1,2-mannosyltransferase MNN2 (597 aa).

Over 1–6 the chain is Cytoplasmic; it reads MIAKQK. A helical membrane pass occupies residues 7 to 27; it reads IKILIGVIIVIATYHFIVSSN. Residues 28–597 are Extracellular-facing; that stretch reads VRSKDLSDLV…ETAEIPTVVS (570 aa). Residues 39–89 are disordered; sequence LGSSDKSTTENERPKNNIVTNNRLDNPPNEDIPHAEPDSPPQEPPKSGNKP. Asparagine 382 carries an N-linked (GlcNAc...) asparagine glycan.

It belongs to the MNN1/MNT family. Requires Mn(2+) as cofactor.

Its subcellular location is the golgi apparatus membrane. The protein operates within protein modification; protein glycosylation. Its activity is regulated as follows. Enzyme activity is regulated by iron. Alpha-1,2-mannosyltransferase required for cell wall integrity. Responsible for addition of the first alpha-1,2-linked mannose to form the branches on the mannan backbone of oligosaccharides. Addition of alpha-1,2-mannose is required for stabilization of the alpha-1,6-mannose backbone and hence regulates mannan fibril length; and is important for both immune recognition and virulence. Promotes iron uptake and usage along the endocytosis pathway under iron-limiting conditions. The protein is Alpha-1,2-mannosyltransferase MNN2 (MNN2) of Candida albicans (strain SC5314 / ATCC MYA-2876) (Yeast).